A 2150-amino-acid polypeptide reads, in one-letter code: Hybrid signal transduction histidine kinase A (2150 aa).

Basic and acidic residues predominate over residues methionine 1–asparagine 10. Disordered regions lie at residues methionine 1–glutamine 41, histidine 68–serine 149, asparagine 184–arginine 267, lysine 286–glycine 323, threonine 339–serine 359, asparagine 415–arginine 505, serine 520–glycine 546, and lysine 560–threonine 733. Residues proline 19–threonine 32 show a composition bias toward polar residues. Over residues histidine 68–glutamine 81 the composition is skewed to low complexity. Positions histidine 82–isoleucine 104 are enriched in polar residues. Composition is skewed to low complexity over residues asparagine 105–asparagine 145 and asparagine 184–isoleucine 244. Polar residues predominate over residues proline 289–valine 304. 3 stretches are compositionally biased toward low complexity: residues asparagine 305 to serine 318, glycine 344 to serine 359, and asparagine 415 to serine 447. Residues proline 448 to arginine 468 are compositionally biased toward polar residues. 3 stretches are compositionally biased toward low complexity: residues asparagine 469 to isoleucine 485, serine 520 to asparagine 545, and asparagine 565 to asparagine 600. Polar residues predominate over residues serine 614–asparagine 628. Residues asparagine 657–asparagine 727 show a composition bias toward low complexity. A helical transmembrane segment spans residues alanine 772–leucine 792. In terms of domain architecture, CHASE spans serine 838–alanine 1082. Residues proline 1098 to valine 1118 traverse the membrane as a helical segment. Residues asparagine 1139–alanine 1164 adopt a coiled-coil conformation. Disordered stretches follow at residues leucine 1209–phenylalanine 1228 and valine 1233–glycine 1252. The PAS domain maps to serine 1235–glutamate 1317. One can recognise a PAC domain in the interval methionine 1321–glutamate 1376. The region spanning threonine 1393–leucine 1620 is the Histidine kinase domain. A Phosphohistidine; by autocatalysis modification is found at histidine 1396. 3 disordered regions span residues glycine 1874–phenylalanine 1893, histidine 1933–serine 1952, and glutamine 1962–valine 2017. Low complexity-rich tracts occupy residues asparagine 1878 to phenylalanine 1893, asparagine 1935 to serine 1952, and glutamine 1962 to leucine 2002. In terms of domain architecture, Response regulatory spans lysine 2026 to glycine 2146. At aspartate 2076 the chain carries 4-aspartylphosphate.

Interacts with SDF-2, an acbA peptide involved in sporulation.

The protein localises to the cell membrane. It catalyses the reaction ATP + protein L-histidine = ADP + protein N-phospho-L-histidine.. Its function is as follows. Acts as a receptor histidine kinase for the cytokinin SDF-2 in a signal transduction pathway that regulates prestalk gene expression and controls terminal differentiation of prespore cells. Binding of SDF-2 to this protein inhibits phosphorelay and induces rapid sporulation. This protein undergoes an ATP-dependent autophosphorylation at a conserved histidine residue in the kinase core, and a phosphoryl group is then transferred to a conserved aspartate residue in the receiver domain. This is Hybrid signal transduction histidine kinase A (dhkA) from Dictyostelium discoideum (Social amoeba).